The chain runs to 193 residues: MFIAIEGIDGAGKTTLARGIGNMLLGEGYRVYMTKEPTDGMENYAGDGVELFLKFTINRYAHQREIDRHIKNGEIVICDRYIRSSYAYQFEGIAEFFGNSEKAWEWMDSVSEIIKIRPDVQIYVDVDEETAMERISRRGLRNPHFENEQKLRSVRQIYKGFQWDLIVDGGRDKEAIISETFEKIIARLRQEKT.

Position 7-14 (7-14) interacts with ATP; it reads GIDGAGKT.

This sequence belongs to the thymidylate kinase family.

It carries out the reaction dTMP + ATP = dTDP + ADP. This chain is Probable thymidylate kinase (tmk), found in Thermoplasma acidophilum (strain ATCC 25905 / DSM 1728 / JCM 9062 / NBRC 15155 / AMRC-C165).